The primary structure comprises 64 residues: Large ribosomal subunit protein bL33c (64 aa).

The protein belongs to the bacterial ribosomal protein bL33 family.

The protein localises to the plastid. The protein resides in the chloroplast. This chain is Large ribosomal subunit protein bL33c (rpl33), found in Trieres chinensis (Marine centric diatom).